The primary structure comprises 303 residues: Glycine--tRNA ligase alpha subunit (303 aa).

It belongs to the class-II aminoacyl-tRNA synthetase family. In terms of assembly, tetramer of two alpha and two beta subunits.

It localises to the cytoplasm. It carries out the reaction tRNA(Gly) + glycine + ATP = glycyl-tRNA(Gly) + AMP + diphosphate. The chain is Glycine--tRNA ligase alpha subunit from Salmonella arizonae (strain ATCC BAA-731 / CDC346-86 / RSK2980).